A 201-amino-acid chain; its full sequence is GTP cyclohydrolase 1 (201 aa).

Zn(2+)-binding residues include cysteine 90, histidine 93, and cysteine 163.

The protein belongs to the GTP cyclohydrolase I family. As to quaternary structure, toroid-shaped homodecamer, composed of two pentamers of five dimers.

It catalyses the reaction GTP + H2O = 7,8-dihydroneopterin 3'-triphosphate + formate + H(+). It participates in cofactor biosynthesis; 7,8-dihydroneopterin triphosphate biosynthesis; 7,8-dihydroneopterin triphosphate from GTP: step 1/1. In Streptomyces avermitilis (strain ATCC 31267 / DSM 46492 / JCM 5070 / NBRC 14893 / NCIMB 12804 / NRRL 8165 / MA-4680), this protein is GTP cyclohydrolase 1.